Consider the following 368-residue polypeptide: Protein ALTERED XYLOGLUCAN 9 (368 aa).

Residues 1–32 (MLGAIHLGVLAACFVLFVPMAMAGWHLSRNKM) are Cytoplasmic-facing. Residues 33-53 (LFFSGALFISLAVCVHLTPYF) form a helical membrane-spanning segment. The Lumenal segment spans residues 54–368 (PSVSDIVASV…ALLIESHQSL (315 aa)). N-linked (GlcNAc...) asparagine glycans are attached at residues Asn99, Asn137, and Asn235.

The protein localises to the golgi apparatus membrane. Its function is as follows. Component of the plant cell wall polysaccharide acetylation pathway. Does not directly catalyze O-acetylation of xyloglucan but exhibits weak acetylesterase activity in vitro. The protein is Protein ALTERED XYLOGLUCAN 9 of Arabidopsis thaliana (Mouse-ear cress).